The primary structure comprises 190 residues: MEALQQKIREEGIVLSDQVLKVDAFLNHQIDPALMQLIGDEFARLFADSGVTKIVTIEASGIAPAVMTGLKLGVPVIFARKHQSLTLTENLLTASVYSFTKQTENTVAISPRHLNSSDRVLVIDDFLANGKASQALISIIKQAGATVAGLGIVIEKSFQGGRAELDSQGYRVESLARVKSLEGGVVTFIE.

2 residues coordinate xanthine: Leu-20 and Asn-27. 128–132 provides a ligand contact to 5-phospho-alpha-D-ribose 1-diphosphate; sequence ANGKA. Lys-156 contacts xanthine.

Belongs to the purine/pyrimidine phosphoribosyltransferase family. Xpt subfamily. As to quaternary structure, homodimer.

The protein localises to the cytoplasm. The catalysed reaction is XMP + diphosphate = xanthine + 5-phospho-alpha-D-ribose 1-diphosphate. Its pathway is purine metabolism; XMP biosynthesis via salvage pathway; XMP from xanthine: step 1/1. Converts the preformed base xanthine, a product of nucleic acid breakdown, to xanthosine 5'-monophosphate (XMP), so it can be reused for RNA or DNA synthesis. In Pseudomonas entomophila (strain L48), this protein is Xanthine phosphoribosyltransferase.